Here is a 291-residue protein sequence, read N- to C-terminus: tRNA U34 carboxymethyltransferase (291 aa).

Carboxy-S-adenosyl-L-methionine-binding positions include Lys61, Trp75, Lys80, Gly100, Asp122–Ser124, Val149–Glu150, Tyr169, and Arg284.

It belongs to the class I-like SAM-binding methyltransferase superfamily. CmoB family. As to quaternary structure, homotetramer.

It catalyses the reaction carboxy-S-adenosyl-L-methionine + 5-hydroxyuridine(34) in tRNA = 5-carboxymethoxyuridine(34) in tRNA + S-adenosyl-L-homocysteine + H(+). Its function is as follows. Catalyzes carboxymethyl transfer from carboxy-S-adenosyl-L-methionine (Cx-SAM) to 5-hydroxyuridine (ho5U) to form 5-carboxymethoxyuridine (cmo5U) at position 34 in tRNAs. The protein is tRNA U34 carboxymethyltransferase of Campylobacter jejuni subsp. doylei (strain ATCC BAA-1458 / RM4099 / 269.97).